The following is a 230-amino-acid chain: Octanoyltransferase (230 aa).

In terms of domain architecture, BPL/LPL catalytic spans 31–230 (PETPDELWIC…GDKLTRYLAP (200 aa)). Residues 70 to 77 (RGGQVTYH), 163 to 165 (ALG), and 176 to 178 (GVA) each bind substrate. The active-site Acyl-thioester intermediate is the Cys-194.

Belongs to the LipB family.

The protein localises to the cytoplasm. It catalyses the reaction octanoyl-[ACP] + L-lysyl-[protein] = N(6)-octanoyl-L-lysyl-[protein] + holo-[ACP] + H(+). It functions in the pathway protein modification; protein lipoylation via endogenous pathway; protein N(6)-(lipoyl)lysine from octanoyl-[acyl-carrier-protein]: step 1/2. In terms of biological role, catalyzes the transfer of endogenously produced octanoic acid from octanoyl-acyl-carrier-protein onto the lipoyl domains of lipoate-dependent enzymes. Lipoyl-ACP can also act as a substrate although octanoyl-ACP is likely to be the physiological substrate. This chain is Octanoyltransferase, found in Albidiferax ferrireducens (strain ATCC BAA-621 / DSM 15236 / T118) (Rhodoferax ferrireducens).